Reading from the N-terminus, the 115-residue chain is Evasin P1181 (115 aa).

An N-terminal signal peptide occupies residues 1–25; the sequence is MALNWSFRVIFVSAMWCALLKFATL. 4 disulfides stabilise this stretch: Cys38–Cys58, Cys54–Cys94, Cys70–Cys99, and Cys89–Cys108. N-linked (GlcNAc...) asparagine glycans are attached at residues Asn45, Asn72, and Asn103.

The protein localises to the secreted. Salivary chemokine-binding protein which binds to host chemokines CCL3 and CCL4. In Amblyomma maculatum (Gulf Coast tick), this protein is Evasin P1181.